A 261-amino-acid polypeptide reads, in one-letter code: uncharacterized protein (261 aa).

Residues 16-147 (KQTSLVLQNL…QTNVNVLRSQ (132 aa)) are a coiled coil.

The protein resides in the cytoplasm. This is an uncharacterized protein from Schizosaccharomyces pombe (strain 972 / ATCC 24843) (Fission yeast).